Here is a 355-residue protein sequence, read N- to C-terminus: N-acetyl-gamma-glutamyl-phosphate reductase (355 aa).

Residue C152 is part of the active site.

It belongs to the NAGSA dehydrogenase family. Type 1 subfamily.

It is found in the cytoplasm. It carries out the reaction N-acetyl-L-glutamate 5-semialdehyde + phosphate + NADP(+) = N-acetyl-L-glutamyl 5-phosphate + NADPH + H(+). It functions in the pathway amino-acid biosynthesis; L-arginine biosynthesis; N(2)-acetyl-L-ornithine from L-glutamate: step 3/4. In terms of biological role, catalyzes the NADPH-dependent reduction of N-acetyl-5-glutamyl phosphate to yield N-acetyl-L-glutamate 5-semialdehyde. The polypeptide is N-acetyl-gamma-glutamyl-phosphate reductase (Psychrobacter cryohalolentis (strain ATCC BAA-1226 / DSM 17306 / VKM B-2378 / K5)).